The sequence spans 209 residues: Uracil phosphoribosyltransferase (209 aa).

5-phospho-alpha-D-ribose 1-diphosphate is bound by residues Arg-79, Arg-104, and 131–139 (DPMLATGAS). Uracil is bound by residues Ile-194 and 199-201 (GDA). 5-phospho-alpha-D-ribose 1-diphosphate is bound at residue Asp-200.

It belongs to the UPRTase family. The cofactor is Mg(2+).

It carries out the reaction UMP + diphosphate = 5-phospho-alpha-D-ribose 1-diphosphate + uracil. It participates in pyrimidine metabolism; UMP biosynthesis via salvage pathway; UMP from uracil: step 1/1. Allosterically activated by GTP. Catalyzes the conversion of uracil and 5-phospho-alpha-D-ribose 1-diphosphate (PRPP) to UMP and diphosphate. The polypeptide is Uracil phosphoribosyltransferase (Staphylococcus aureus (strain JH1)).